Reading from the N-terminus, the 338-residue chain is Fructose-1,6-bisphosphatase class 1 (338 aa).

Positions 90, 112, 114, and 115 each coordinate Mg(2+). Residues 115–118, Asn207, and Lys273 contribute to the substrate site; that span reads DGSS. Glu279 serves as a coordination point for Mg(2+).

Belongs to the FBPase class 1 family. In terms of assembly, homotetramer. The cofactor is Mg(2+).

Its subcellular location is the cytoplasm. It catalyses the reaction beta-D-fructose 1,6-bisphosphate + H2O = beta-D-fructose 6-phosphate + phosphate. It participates in carbohydrate biosynthesis; gluconeogenesis. This chain is Fructose-1,6-bisphosphatase class 1, found in Stenotrophomonas maltophilia (strain K279a).